A 293-amino-acid polypeptide reads, in one-letter code: Elongation factor Ts (293 aa).

The tract at residues 80–83 (TDFV) is involved in Mg(2+) ion dislocation from EF-Tu.

The protein belongs to the EF-Ts family.

The protein resides in the cytoplasm. In terms of biological role, associates with the EF-Tu.GDP complex and induces the exchange of GDP to GTP. It remains bound to the aminoacyl-tRNA.EF-Tu.GTP complex up to the GTP hydrolysis stage on the ribosome. The chain is Elongation factor Ts from Aeromonas hydrophila subsp. hydrophila (strain ATCC 7966 / DSM 30187 / BCRC 13018 / CCUG 14551 / JCM 1027 / KCTC 2358 / NCIMB 9240 / NCTC 8049).